Reading from the N-terminus, the 429-residue chain is C4-dicarboxylate transport protein (429 aa).

A run of 8 helical transmembrane segments spans residues 9–29, 45–65, 79–99, 149–169, 185–205, 223–243, 308–328, and 356–376; these read VLYV…HFYP, LIKM…IAGM, LLYF…ATHI, GEIL…AHLG, VLFG…FGAM, LIGT…GTIA, IYMT…LTWM, and AATL…ILGI.

It belongs to the dicarboxylate/amino acid:cation symporter (DAACS) (TC 2.A.23) family.

Its subcellular location is the cell inner membrane. Its function is as follows. Responsible for the transport of dicarboxylates such as succinate, fumarate, and malate from the periplasm across the membrane. The polypeptide is C4-dicarboxylate transport protein (Burkholderia ambifaria (strain MC40-6)).